We begin with the raw amino-acid sequence, 201 residues long: MELVLKDASRALEVSETTFGRDFNEALVHQVVVAYAANARQGTRAQKTRAEITGTGKKPWRQKGTGRARAGGIKGPLWRGGGVTFAAKTQDHSQKVNKKMYRGALMSILSELVRQERLVVVEQFAVEAPKTKELKAKLKAMDLEDVLIVTAEVDENLFLAARNLYKVDVRDVAGLDPVSLIAFNKVLVTADAVKQIEEMLA.

The tract at residues 46 to 71 (QKTRAEITGTGKKPWRQKGTGRARAG) is disordered.

Belongs to the universal ribosomal protein uL4 family. As to quaternary structure, part of the 50S ribosomal subunit.

One of the primary rRNA binding proteins, this protein initially binds near the 5'-end of the 23S rRNA. It is important during the early stages of 50S assembly. It makes multiple contacts with different domains of the 23S rRNA in the assembled 50S subunit and ribosome. Functionally, forms part of the polypeptide exit tunnel. The sequence is that of Large ribosomal subunit protein uL4 from Shewanella amazonensis (strain ATCC BAA-1098 / SB2B).